Here is a 972-residue protein sequence, read N- to C-terminus: UPF0746 protein DDB_G0280785 (972 aa).

Residues 1 to 19 (MISNKRKEIENINRHHEKD) are compositionally biased toward basic and acidic residues. The interval 1–30 (MISNKRKEIENINRHHEKDNDDDDSDGIDN) is disordered. The SAP domain maps to 44–78 (SGSTNYRELQIIAKSLGLASNGKKQLVYNRIEGYF).

It belongs to the UPF0746 family.

This Dictyostelium discoideum (Social amoeba) protein is UPF0746 protein DDB_G0280785.